The following is a 353-amino-acid chain: Suppressor of RNA-mediated gene silencing (353 aa).

The protein belongs to the phytoreovirus non-structural protein 10 family.

Functionally, suppressor of RNA-mediated gene silencing, also known as post-transcriptional gene silencing (PTGS), a mechanism of plant viral defense that limits the accumulation of viral RNAs. In Alopecurus aequalis (Barnyard grass), this protein is Suppressor of RNA-mediated gene silencing.